Here is a 321-residue protein sequence, read N- to C-terminus: Tetraacyldisaccharide 4'-kinase (321 aa).

Residue 54–61 (SVGGTGKT) coordinates ATP.

Belongs to the LpxK family.

The catalysed reaction is a lipid A disaccharide + ATP = a lipid IVA + ADP + H(+). The protein operates within glycolipid biosynthesis; lipid IV(A) biosynthesis; lipid IV(A) from (3R)-3-hydroxytetradecanoyl-[acyl-carrier-protein] and UDP-N-acetyl-alpha-D-glucosamine: step 6/6. Its function is as follows. Transfers the gamma-phosphate of ATP to the 4'-position of a tetraacyldisaccharide 1-phosphate intermediate (termed DS-1-P) to form tetraacyldisaccharide 1,4'-bis-phosphate (lipid IVA). This chain is Tetraacyldisaccharide 4'-kinase, found in Rickettsia conorii (strain ATCC VR-613 / Malish 7).